The primary structure comprises 278 residues: ATP synthase subunit delta (278 aa).

Belongs to the ATPase delta chain family. F-type ATPases have 2 components, F(1) - the catalytic core - and F(0) - the membrane proton channel. F(1) has five subunits: alpha(3), beta(3), gamma(1), delta(1), epsilon(1). F(0) has three main subunits: a(1), b(2) and c(10-14). The alpha and beta chains form an alternating ring which encloses part of the gamma chain. F(1) is attached to F(0) by a central stalk formed by the gamma and epsilon chains, while a peripheral stalk is formed by the delta and b chains.

The protein resides in the cell membrane. In terms of biological role, f(1)F(0) ATP synthase produces ATP from ADP in the presence of a proton or sodium gradient. F-type ATPases consist of two structural domains, F(1) containing the extramembraneous catalytic core and F(0) containing the membrane proton channel, linked together by a central stalk and a peripheral stalk. During catalysis, ATP synthesis in the catalytic domain of F(1) is coupled via a rotary mechanism of the central stalk subunits to proton translocation. This protein is part of the stalk that links CF(0) to CF(1). It either transmits conformational changes from CF(0) to CF(1) or is implicated in proton conduction. This is ATP synthase subunit delta from Rhodococcus opacus (strain B4).